We begin with the raw amino-acid sequence, 142 residues long: Protein tost-1 (142 aa).

The disordered stretch occupies residues 97–123 (KVFEEEDKENAPTKKAVLKPSSTDEKK).

Component of the tost-1 variant of the PETISCO complex (also called the pid-3, erh-2, tofu-6, and ife-3 small RNA complex) containing at least tost-1, tofu-6, ife-3, pid-3, and erh-2, which plays an essential role in embryogenesis. Within the complex interacts with erh-2. Within the complex interacts with pid-3 and tofu-6. In contrast to the pid-1 variant of the PETISCO complex, the tost-1 variant of the PETISCO complex plays a minor role in the biogenesis of a class of 21 nucleotide PIWI-interacting RNAs (piRNAs) that possess a uracil residue at the 5'-end (also called 21U-RNAs). Expressed in the germline.

It localises to the cytoplasm. Its subcellular location is the nucleus. Component of the tost-1 variant of the PETISCO complex which plays an essential role in embryogenesis. Within the complex acts as an adapter which binds to the complex via erh-2. Does not seem to play a role in the biogenesis of a class of 21 nucleotide PIWI-interacting RNAs (piRNAs) that possess a uracil residue at the 5'-end (also called 21U-RNAs). May inhibit 21U-RNA accumulation. Required for chromosome segregation and cell division in early embryos. The polypeptide is Protein tost-1 (Caenorhabditis elegans).